The following is a 371-amino-acid chain: Nicotinate-nucleotide pyrophosphorylase [carboxylating], chloroplastic (371 aa).

The N-terminal 48 residues, 1–48, are a transit peptide targeting the chloroplast; sequence MPAAAAAAAPPNPNVLQLAPRLRGLVSFPSSYSSSSPFSNRLRLRLPR. Residues Arg162, 193–195, Arg217, Lys227, Glu260, Asp287, 319–321, and 340–342 contribute to the substrate site; these read TRK, SGN, and SGA.

The protein belongs to the NadC/ModD family.

It is found in the plastid. It localises to the chloroplast. It catalyses the reaction nicotinate beta-D-ribonucleotide + CO2 + diphosphate = quinolinate + 5-phospho-alpha-D-ribose 1-diphosphate + 2 H(+). It functions in the pathway cofactor biosynthesis; NAD(+) biosynthesis; nicotinate D-ribonucleotide from quinolinate: step 1/1. Functionally, involved in the catabolism of quinolinic acid (QA). The chain is Nicotinate-nucleotide pyrophosphorylase [carboxylating], chloroplastic from Oryza sativa subsp. japonica (Rice).